The chain runs to 274 residues: 4-diphosphocytidyl-2-C-methyl-D-erythritol kinase (274 aa).

Residue lysine 8 is part of the active site. Residue 94–104 (PSGAGLGGGSS) participates in ATP binding. Aspartate 136 is an active-site residue.

It belongs to the GHMP kinase family. IspE subfamily.

It catalyses the reaction 4-CDP-2-C-methyl-D-erythritol + ATP = 4-CDP-2-C-methyl-D-erythritol 2-phosphate + ADP + H(+). Its pathway is isoprenoid biosynthesis; isopentenyl diphosphate biosynthesis via DXP pathway; isopentenyl diphosphate from 1-deoxy-D-xylulose 5-phosphate: step 3/6. Functionally, catalyzes the phosphorylation of the position 2 hydroxy group of 4-diphosphocytidyl-2C-methyl-D-erythritol. The polypeptide is 4-diphosphocytidyl-2-C-methyl-D-erythritol kinase (Bacteroides thetaiotaomicron (strain ATCC 29148 / DSM 2079 / JCM 5827 / CCUG 10774 / NCTC 10582 / VPI-5482 / E50)).